The primary structure comprises 160 residues: MMNRVVLVGRLTKDPDLRYTPAGVAVATFTLAVNRTFTNQNGEREADFINCVVWRKPAENVANFLKKGSMAGVDGRVQTRNYEDNDGKRVFVTEVVAESVQFLEPKNNNVEGATSNNYQNKANYSNNNQTSSYRADTSQKSDSFASEGKPIDINEDDLPF.

An SSB domain is found at Met-2–Glu-104. Positions Asn-107–Phe-160 are disordered. Residues Ser-115–Gln-129 show a composition bias toward low complexity. The span at Thr-130–Phe-144 shows a compositional bias: polar residues. The short motif at Glu-155 to Phe-160 is the Important for interaction with partner proteins element.

As to quaternary structure, homotetramer.

Plays an important role in DNA replication, recombination and repair. Binds to ssDNA and to an array of partner proteins to recruit them to their sites of action during DNA metabolism. The sequence is that of Single-stranded DNA-binding protein 2 (ssb2) from Listeria monocytogenes serovar 1/2a (strain ATCC BAA-679 / EGD-e).